The chain runs to 137 residues: MPTINQLVRKGRKSRTSKSDAPALNFGYNSMKKKATDNPAPQKRGVATRVGTMTPKKPNSALRKYARVRLSNLIEVTAYIPGIGHNLQEHSVVLIRGGRVKDLPGVRYHVIRGALDTAGVDGRMQSRSKYGTKRPKK.

The interval 1–44 (MPTINQLVRKGRKSRTSKSDAPALNFGYNSMKKKATDNPAPQKR) is disordered. At D102 the chain carries 3-methylthioaspartic acid.

The protein belongs to the universal ribosomal protein uS12 family. In terms of assembly, part of the 30S ribosomal subunit. Contacts proteins S8 and S17. May interact with IF1 in the 30S initiation complex.

Its function is as follows. With S4 and S5 plays an important role in translational accuracy. In terms of biological role, interacts with and stabilizes bases of the 16S rRNA that are involved in tRNA selection in the A site and with the mRNA backbone. Located at the interface of the 30S and 50S subunits, it traverses the body of the 30S subunit contacting proteins on the other side and probably holding the rRNA structure together. The combined cluster of proteins S8, S12 and S17 appears to hold together the shoulder and platform of the 30S subunit. The chain is Small ribosomal subunit protein uS12 from Latilactobacillus sakei subsp. sakei (strain 23K) (Lactobacillus sakei subsp. sakei).